An 88-amino-acid chain; its full sequence is Small ribosomal subunit protein uS15 (88 aa).

Belongs to the universal ribosomal protein uS15 family. As to quaternary structure, part of the 30S ribosomal subunit. Forms a bridge to the 50S subunit in the 70S ribosome, contacting the 23S rRNA.

In terms of biological role, one of the primary rRNA binding proteins, it binds directly to 16S rRNA where it helps nucleate assembly of the platform of the 30S subunit by binding and bridging several RNA helices of the 16S rRNA. Its function is as follows. Forms an intersubunit bridge (bridge B4) with the 23S rRNA of the 50S subunit in the ribosome. The protein is Small ribosomal subunit protein uS15 of Francisella tularensis subsp. tularensis (strain FSC 198).